The primary structure comprises 135 residues: MPPKARAGAAVKKVRRKERKNVAHGQAHIKSTFNNTIVSVTDPTGAVISWASAGQVGFKGSRKSTPFAAQLAAEAAARRAMEHGMRKVDVFVKGPGSGRETAIRSLQAVGLEVGQISDVTPQPHNGCRPPKRRRV.

The span at 1–11 shows a compositional bias: low complexity; the sequence is MPPKARAGAAV. A disordered region spans residues 1–22; it reads MPPKARAGAAVKKVRRKERKNV.

Belongs to the universal ribosomal protein uS11 family. As to quaternary structure, part of the 30S ribosomal subunit. Interacts with proteins S7 and S18. Binds to IF-3.

Functionally, located on the platform of the 30S subunit, it bridges several disparate RNA helices of the 16S rRNA. Forms part of the Shine-Dalgarno cleft in the 70S ribosome. The chain is Small ribosomal subunit protein uS11 from Salinispora tropica (strain ATCC BAA-916 / DSM 44818 / JCM 13857 / NBRC 105044 / CNB-440).